Consider the following 490-residue polypeptide: Protein nucleotidyltransferase YdiU (490 aa).

ATP contacts are provided by Gly-94, Gly-96, Arg-97, Lys-117, Asp-129, Gly-130, Arg-180, and Arg-187. Catalysis depends on Asp-256, which acts as the Proton acceptor. Residues Asn-257 and Asp-266 each contribute to the Mg(2+) site. Asp-266 provides a ligand contact to ATP.

This sequence belongs to the SELO family. The cofactor is Mg(2+). Mn(2+) serves as cofactor.

The enzyme catalyses L-seryl-[protein] + ATP = 3-O-(5'-adenylyl)-L-seryl-[protein] + diphosphate. It carries out the reaction L-threonyl-[protein] + ATP = 3-O-(5'-adenylyl)-L-threonyl-[protein] + diphosphate. It catalyses the reaction L-tyrosyl-[protein] + ATP = O-(5'-adenylyl)-L-tyrosyl-[protein] + diphosphate. The catalysed reaction is L-histidyl-[protein] + UTP = N(tele)-(5'-uridylyl)-L-histidyl-[protein] + diphosphate. The enzyme catalyses L-seryl-[protein] + UTP = O-(5'-uridylyl)-L-seryl-[protein] + diphosphate. It carries out the reaction L-tyrosyl-[protein] + UTP = O-(5'-uridylyl)-L-tyrosyl-[protein] + diphosphate. Nucleotidyltransferase involved in the post-translational modification of proteins. It can catalyze the addition of adenosine monophosphate (AMP) or uridine monophosphate (UMP) to a protein, resulting in modifications known as AMPylation and UMPylation. This chain is Protein nucleotidyltransferase YdiU, found in Clostridium beijerinckii (strain ATCC 51743 / NCIMB 8052) (Clostridium acetobutylicum).